Reading from the N-terminus, the 602-residue chain is tRNA uridine 5-carboxymethylaminomethyl modification enzyme MnmG (602 aa).

Position 10–15 (10–15 (GGGHAG)) interacts with FAD. Positions 217-242 (DPQPRGFTGRPGPRAAESPTWQTHTT) are disordered. 267–281 (GPRYCPSIEDKVVRF) lines the NAD(+) pocket.

It belongs to the MnmG family. In terms of assembly, homodimer. Heterotetramer of two MnmE and two MnmG subunits. FAD serves as cofactor.

It is found in the cytoplasm. NAD-binding protein involved in the addition of a carboxymethylaminomethyl (cmnm) group at the wobble position (U34) of certain tRNAs, forming tRNA-cmnm(5)s(2)U34. This Deinococcus geothermalis (strain DSM 11300 / CIP 105573 / AG-3a) protein is tRNA uridine 5-carboxymethylaminomethyl modification enzyme MnmG.